Here is a 239-residue protein sequence, read N- to C-terminus: Probable transcriptional regulatory protein BCQ_0605 (239 aa).

It belongs to the TACO1 family. YeeN subfamily.

The protein resides in the cytoplasm. This chain is Probable transcriptional regulatory protein BCQ_0605, found in Bacillus cereus (strain Q1).